The sequence spans 131 residues: Profilin-2 (131 aa).

Cys13 and Cys115 are oxidised to a cystine. The Involved in PIP2 interaction motif lies at 81 to 97; the sequence is AVIRGKKGAGGITIKKT. Thr111 carries the post-translational modification Phosphothreonine.

It belongs to the profilin family. As to quaternary structure, occurs in many kinds of cells as a complex with monomeric actin in a 1:1 ratio. Post-translationally, phosphorylated by MAP kinases.

The protein resides in the cytoplasm. The protein localises to the cytoskeleton. Its function is as follows. Binds to actin and affects the structure of the cytoskeleton. At high concentrations, profilin prevents the polymerization of actin, whereas it enhances it at low concentrations. By binding to PIP2, it inhibits the formation of IP3 and DG. This chain is Profilin-2 (PRO2), found in Phleum pratense (Common timothy).